Reading from the N-terminus, the 657-residue chain is Protein PSK SIMULATOR 1 (657 aa).

Composition is skewed to polar residues over residues 1–15 (MGGLCSRSSSVNNAP), 26–39 (HLNNNASDLNSHSG), 62–76 (ESFSFPIVSSGSHPQ), and 540–556 (RSPNQKTIQLSSGSHNP). Disordered stretches follow at residues 1-80 (MGGL…NIED) and 534-559 (PVKSPIRSPNQKTIQLSSGSHNPSMG). Residue Gly2 is the site of N-myristoyl glycine attachment.

It localises to the nucleus. Its function is as follows. Promotes seedling growth probably via the regulation of phytosulfokine (PSK) signaling; PSK are peptide phytohormones acting as growth factors. Together with PSI2 and PSI3, required during vegetative growth and reproduction. May also have a function in carbohydrate metabolism. The protein is Protein PSK SIMULATOR 1 of Arabidopsis thaliana (Mouse-ear cress).